The following is a 77-amino-acid chain: ATP synthase subunit c (77 aa).

Helical transmembrane passes span Ile-13–Ala-33 and Phe-55–Phe-75.

This sequence belongs to the ATPase C chain family. F-type ATPases have 2 components, F(1) - the catalytic core - and F(0) - the membrane proton channel. F(1) has five subunits: alpha(3), beta(3), gamma(1), delta(1), epsilon(1). F(0) has three main subunits: a(1), b(2) and c(10-14). The alpha and beta chains form an alternating ring which encloses part of the gamma chain. F(1) is attached to F(0) by a central stalk formed by the gamma and epsilon chains, while a peripheral stalk is formed by the delta and b chains.

It is found in the cell membrane. Functionally, f(1)F(0) ATP synthase produces ATP from ADP in the presence of a proton or sodium gradient. F-type ATPases consist of two structural domains, F(1) containing the extramembraneous catalytic core and F(0) containing the membrane proton channel, linked together by a central stalk and a peripheral stalk. During catalysis, ATP synthesis in the catalytic domain of F(1) is coupled via a rotary mechanism of the central stalk subunits to proton translocation. Its function is as follows. Key component of the F(0) channel; it plays a direct role in translocation across the membrane. A homomeric c-ring of between 10-14 subunits forms the central stalk rotor element with the F(1) delta and epsilon subunits. The protein is ATP synthase subunit c of Clavibacter michiganensis subsp. michiganensis (strain NCPPB 382).